The chain runs to 61 residues: Small ribosomal subunit protein eS30A (61 aa).

Positions 1 to 36 (MGKVHGSLARAGKVKSQTPKVEKQEKPKQPKGRAYK) are disordered.

Belongs to the eukaryotic ribosomal protein eS30 family. As to quaternary structure, component of the small ribosomal subunit (SSU). Mature yeast ribosomes consist of a small (40S) and a large (60S) subunit. The 40S small subunit contains 1 molecule of ribosomal RNA (18S rRNA) and at least 33 different proteins. The large 60S subunit contains 3 rRNA molecules (25S, 5.8S and 5S rRNA) and at least 46 different proteins.

It is found in the cytoplasm. The protein localises to the nucleus. Component of the ribosome, a large ribonucleoprotein complex responsible for the synthesis of proteins in the cell. The small ribosomal subunit (SSU) binds messenger RNAs (mRNAs) and translates the encoded message by selecting cognate aminoacyl-transfer RNA (tRNA) molecules. The large subunit (LSU) contains the ribosomal catalytic site termed the peptidyl transferase center (PTC), which catalyzes the formation of peptide bonds, thereby polymerizing the amino acids delivered by tRNAs into a polypeptide chain. The nascent polypeptides leave the ribosome through a tunnel in the LSU and interact with protein factors that function in enzymatic processing, targeting, and the membrane insertion of nascent chains at the exit of the ribosomal tunnel. This chain is Small ribosomal subunit protein eS30A (rps3001), found in Schizosaccharomyces pombe (strain 972 / ATCC 24843) (Fission yeast).